The chain runs to 247 residues: 5'-nucleotidase SurE (247 aa).

Residues aspartate 8, aspartate 9, serine 39, and asparagine 91 each coordinate a divalent metal cation.

It belongs to the SurE nucleotidase family. A divalent metal cation serves as cofactor.

The protein localises to the cytoplasm. The enzyme catalyses a ribonucleoside 5'-phosphate + H2O = a ribonucleoside + phosphate. Nucleotidase that shows phosphatase activity on nucleoside 5'-monophosphates. The protein is 5'-nucleotidase SurE of Aromatoleum aromaticum (strain DSM 19018 / LMG 30748 / EbN1) (Azoarcus sp. (strain EbN1)).